Reading from the N-terminus, the 231-residue chain is Translin-associated protein X homolog (231 aa).

Belongs to the translin family.

It is found in the cytoplasm. The protein resides in the nucleus. This is Translin-associated protein X homolog from Schizosaccharomyces pombe (strain 972 / ATCC 24843) (Fission yeast).